The sequence spans 483 residues: V-type proton ATPase subunit B 2 (483 aa).

This sequence belongs to the ATPase alpha/beta chains family. As to quaternary structure, V-ATPase is a heteromultimeric enzyme composed of a peripheral catalytic V1 complex (main components: subunits A, B, C, D, E, and F) attached to an integral membrane V0 proton pore complex (main component: the proteolipid protein).

Its function is as follows. Non-catalytic subunit of the peripheral V1 complex of vacuolar ATPase. V-ATPase is responsible for acidifying a variety of intracellular compartments in eukaryotic cells. The polypeptide is V-type proton ATPase subunit B 2 (Hordeum vulgare (Barley)).